Reading from the N-terminus, the 365-residue chain is D-alanine--D-alanine ligase (365 aa).

One can recognise an ATP-grasp domain in the interval 140-346 (KKILRRHGLQ…YSQLLTDLIY (207 aa)). 173-228 (EKQLSYPIFVKPANLGSSVGISKVKNREELIQGIDLAVKYDMKCLAEEFIPGKEIE) provides a ligand contact to ATP. The Mg(2+) site is built by D299, E313, and N315.

It belongs to the D-alanine--D-alanine ligase family. Mg(2+) is required as a cofactor. Requires Mn(2+) as cofactor.

The protein localises to the cytoplasm. The enzyme catalyses 2 D-alanine + ATP = D-alanyl-D-alanine + ADP + phosphate + H(+). Its pathway is cell wall biogenesis; peptidoglycan biosynthesis. Its function is as follows. Cell wall formation. The polypeptide is D-alanine--D-alanine ligase (Natranaerobius thermophilus (strain ATCC BAA-1301 / DSM 18059 / JW/NM-WN-LF)).